We begin with the raw amino-acid sequence, 627 residues long: Transketolase-like protein 2 (627 aa).

His-39 lines the substrate pocket. Thiamine diphosphate is bound by residues Ser-42, His-79, and 125–127; that span reads GSL. Asp-157 provides a ligand contact to Mg(2+). Thiamine diphosphate-binding residues include Gly-158 and Asn-187. The Mg(2+) site is built by Asn-187 and Leu-189. Lys-249 and His-263 together coordinate thiamine diphosphate. Positions 263, 323, and 350 each coordinate substrate. Residues Glu-371 and Phe-397 each contribute to the thiamine diphosphate site. The active-site Proton donor is Glu-371. 2 residues coordinate substrate: His-421 and Asp-429. Gln-433 is a binding site for thiamine diphosphate. Arg-479 provides a ligand contact to substrate.

The protein belongs to the transketolase family. As to quaternary structure, homodimer. Mg(2+) serves as cofactor. Requires Ca(2+) as cofactor. Mn(2+) is required as a cofactor. It depends on Co(2+) as a cofactor. The cofactor is thiamine diphosphate.

The enzyme catalyses D-sedoheptulose 7-phosphate + D-glyceraldehyde 3-phosphate = aldehydo-D-ribose 5-phosphate + D-xylulose 5-phosphate. In terms of biological role, plays an essential role in total transketolase activity and cell proliferation in cancer cells; after transfection with anti-TKTL1 siRNA, total transketolase activity dramatically decreases and proliferation was significantly inhibited in cancer cells. Plays a pivotal role in carcinogenesis. The polypeptide is Transketolase-like protein 2 (Tktl2) (Mus musculus (Mouse)).